Reading from the N-terminus, the 98-residue chain is Large ribosomal subunit protein uL23 (98 aa).

Belongs to the universal ribosomal protein uL23 family. As to quaternary structure, part of the 50S ribosomal subunit. Contacts protein L29, and trigger factor when it is bound to the ribosome.

In terms of biological role, one of the early assembly proteins it binds 23S rRNA. One of the proteins that surrounds the polypeptide exit tunnel on the outside of the ribosome. Forms the main docking site for trigger factor binding to the ribosome. This chain is Large ribosomal subunit protein uL23, found in Methylobacterium sp. (strain 4-46).